The following is an 821-amino-acid chain: MAPKQKDDDFVLTLSDDENDAFNNFDVDGDDGDDGDELASSGTKKRKRDTAETTQNTSKKQKQQKPVKNGLKKNKKGQAETPAEEEQEEPQEEEDAGEDDGALDSDFEFDVGGVANTVVEGFDGWGMGNAEDEGAAKKGDKKAVDIDDIISRRQAKKEAAEAKKKKKQSEAQDNESWDGVAEDEDAESDGGMSVDFQDDELLAADGFGMGADGEDESDNEEAQDESGSDNDSDDDEEKDSEDDDDEAASDNDSVATPVGHPEDEASDNDSDAESEIDAEEQEKRKAFFAPEEEKTKEQADGAQRSFQEFNLSRPILRGLAAVNFTNPTPIQRKTIPVALLGKDIVGSAVTGSGKTAAFVVPILERLLFRPRKVPTSRVAILMPTRELAVQCYNVATKLATYTDITFCQLVGGFSLREQENILKKRPDVIIATPGRFIDHMRNSASFTVDTLEILVLDEADRMLEDGFADELNEILTTIPKSRQTMLFSATMTDTVDKLIRVGLNRPVRLMVDSKKNTSLTLVQEFVRLRPGREDKRLGYLLYLCKEIYTGRVIVFFRQKREAHRVRIVFGLLGLKAAELHGSMSQEQRIKSVENFRDGKVAFLLATDLASRGLDIKGVETVINYEAPQSHEIYLHRVGRTARAGRSGRACTIAAEPDRKVVKAAVKASKAQGAKVASRVVDPAVADQWAKKAADLEEEINEVLEEEKTEKQLAQAEMQVTKGENLIKHEAEIMSRPKRTWFESEKDKRAARKLGAAQLNGPDAGLSKKEKVKLSNKDKKRLDDARQRLEGKAGWKKGKAEREAPKPAKGKGKGKDKKKGKN.

The interval 1–304 is disordered; sequence MAPKQKDDDF…TKEQADGAQR (304 aa). Positions 27–37 are enriched in acidic residues; it reads VDGDDGDDGDE. Basic residues predominate over residues 59 to 76; that stretch reads KKQKQQKPVKNGLKKNKK. Residues 82 to 109 are compositionally biased toward acidic residues; the sequence is PAEEEQEEPQEEEDAGEDDGALDSDFEF. Residues 134-162 are compositionally biased toward basic and acidic residues; the sequence is GAAKKGDKKAVDIDDIISRRQAKKEAAEA. Composition is skewed to acidic residues over residues 172 to 188, 212 to 249, and 264 to 280; these read QDNE…DAES, DGED…EAAS, and EASD…DAEE. Residues 281–299 are compositionally biased toward basic and acidic residues; it reads QEKRKAFFAPEEEKTKEQA. A Q motif motif is present at residues 304-332; it reads RSFQEFNLSRPILRGLAAVNFTNPTPIQR. Residues 335–509 form the Helicase ATP-binding domain; that stretch reads IPVALLGKDI…RVGLNRPVRL (175 aa). 348–355 provides a ligand contact to ATP; it reads AVTGSGKT. The short motif at 457–460 is the DEAD box element; sequence DEAD. The Helicase C-terminal domain occupies 536-683; the sequence is RLGYLLYLCK…KVASRVVDPA (148 aa). The tract at residues 754 to 821 is disordered; the sequence is GAAQLNGPDA…KGKDKKKGKN (68 aa). Basic and acidic residues predominate over residues 765–805; the sequence is LSKKEKVKLSNKDKKRLDDARQRLEGKAGWKKGKAEREAPK. Over residues 807 to 821 the composition is skewed to basic residues; that stretch reads AKGKGKGKDKKKGKN.

This sequence belongs to the DEAD box helicase family. DDX27/DRS1 subfamily. In terms of assembly, associates with pre-ribosomal particles.

The protein resides in the nucleus. Its subcellular location is the nucleolus. It carries out the reaction ATP + H2O = ADP + phosphate + H(+). In terms of biological role, ATP-binding RNA helicase involved in ribosome assembly. The sequence is that of ATP-dependent RNA helicase drs1 (drs1) from Aspergillus terreus (strain NIH 2624 / FGSC A1156).